A 188-amino-acid chain; its full sequence is Putative manganese efflux pump MntP (188 aa).

The next 6 helical transmembrane spans lie at 1 to 21 (MLIQILLIGVSVSMDTFAVSI), 40 to 60 (LWFGGFQALFPLLGYFAASTF), 64 to 84 (VTAVDHWIIFGLLALIGGNMV), 105 to 127 (HMLPLAVACSIDAVAVGVSFAFM), 131 to 153 (IWLSVVIIGITTGLFSAAGLYIG), and 166 to 186 (IAGGVVLILIGLKVLFEHLGF).

Belongs to the MntP (TC 9.B.29) family.

The protein localises to the cell membrane. In terms of biological role, probably functions as a manganese efflux pump. The chain is Putative manganese efflux pump MntP from Bifidobacterium adolescentis (strain ATCC 15703 / DSM 20083 / NCTC 11814 / E194a).